A 73-amino-acid polypeptide reads, in one-letter code: Protein SlyX homolog (73 aa).

The protein belongs to the SlyX family.

The polypeptide is Protein SlyX homolog (Histophilus somni (strain 129Pt) (Haemophilus somnus)).